A 415-amino-acid chain; its full sequence is Protein fuzzy homolog (415 aa).

It belongs to the fuzzy family. In terms of assembly, component of the CPLANE (ciliogenesis and planar polarity effectors) complex, composed of INTU, FUZ and WDPCP. Interacts with CPLANE1 and CPLANE2.

The protein resides in the cytoplasm. It localises to the cytoskeleton. Its subcellular location is the cilium basal body. Its function is as follows. Probable planar cell polarity effector involved in cilium biogenesis. Proposed to function as core component of the CPLANE (ciliogenesis and planar polarity effectors) complex involved in the recruitment of peripheral IFT-A proteins to basal bodies. May regulate protein and membrane transport to the cilium. May regulate the morphogenesis of hair follicles which depends on functional primary cilia. Binds phosphatidylinositol 3-phosphate with highest affinity, followed by phosphatidylinositol 4-phosphate and phosphatidylinositol 5-phosphate. The sequence is that of Protein fuzzy homolog (Fuz) from Rattus norvegicus (Rat).